A 430-amino-acid chain; its full sequence is Probable aspartic-type endopeptidase TRV_06366 (430 aa).

An N-terminal signal peptide occupies residues 1 to 17 (MHVSTLLVAVLLPLALS). Positions 18–87 (KPTPRKKTSS…SKATAGSGKE (70 aa)) are cleaved as a propeptide — activation peptide. Positions 61–104 (HEMEGYHPQPISKLPGNSKATAGSGKEGVESQDEKGEVVNNPTD) are disordered. Positions 87-104 (EGVESQDEKGEVVNNPTD) are enriched in basic and acidic residues. One can recognise a Peptidase A1 domain in the interval 109-427 (FLSPVTIGGQ…DQRGPSISLA (319 aa)). D125 is a catalytic residue. An N-linked (GlcNAc...) asparagine glycan is attached at N306. Residue D314 is part of the active site.

It belongs to the peptidase A1 family.

It localises to the secreted. In terms of biological role, probable secreted aspartic-type endopeptidase which contributes to virulence. The sequence is that of Probable aspartic-type endopeptidase TRV_06366 from Trichophyton verrucosum (strain HKI 0517).